Consider the following 283-residue polypeptide: NAD kinase (283 aa).

Asp69 (proton acceptor) is an active-site residue. NAD(+) contacts are provided by residues 69–70 (DG), 138–139 (NE), Lys166, Asp168, Leu176, 179–184 (TAYNLS), and Gln235.

Belongs to the NAD kinase family. A divalent metal cation is required as a cofactor.

Its subcellular location is the cytoplasm. The catalysed reaction is NAD(+) + ATP = ADP + NADP(+) + H(+). In terms of biological role, involved in the regulation of the intracellular balance of NAD and NADP, and is a key enzyme in the biosynthesis of NADP. Catalyzes specifically the phosphorylation on 2'-hydroxyl of the adenosine moiety of NAD to yield NADP. In Helicobacter acinonychis (strain Sheeba), this protein is NAD kinase.